We begin with the raw amino-acid sequence, 267 residues long: Alpha carbonic anhydrase 4 (267 aa).

The N-terminal stretch at 1–26 (MDTNAKTIFFMAMCFIYLSFPNISHA) is a signal peptide. N-linked (GlcNAc...) asparagine glycosylation occurs at Asn-22. Residues 34–264 (TPFTYEQKTE…SKGRSVWFYD (231 aa)) form the Alpha-carbonic anhydrase domain. The cysteines at positions 59 and 214 are disulfide-linked. The active-site Proton acceptor is the His-99. Residues His-125 and His-127 each coordinate Zn(2+). N-linked (GlcNAc...) asparagine glycosylation occurs at Asn-135. His-144 is a binding site for Zn(2+). 210–211 (TV) lines the substrate pocket.

This sequence belongs to the alpha-class carbonic anhydrase family. The cofactor is Zn(2+). In terms of processing, N-glycosylated.

It localises to the plastid. It is found in the chloroplast stroma. It catalyses the reaction hydrogencarbonate + H(+) = CO2 + H2O. Reversible hydration of carbon dioxide. The polypeptide is Alpha carbonic anhydrase 4 (ACA4) (Arabidopsis thaliana (Mouse-ear cress)).